We begin with the raw amino-acid sequence, 486 residues long: Shutoff alkaline exonuclease (486 aa).

The protein belongs to the herpesviridae alkaline nuclease family. In terms of assembly, forms a complex with the DNA polymerase, the DNA polymerase processivity factor, and the major DNA binding protein.

The protein resides in the host nucleus. It is found in the host cytoplasm. Functionally, plays a role in processing non linear or branched viral DNA intermediates in order to promote the production of mature packaged unit-length linear progeny viral DNA molecules. Exhibits endonuclease and exonuclease activities and accepts both double-stranded and single-stranded DNA as substrate. Exonuclease digestion of DNA is in the 5'-&gt; 3' direction and the products are 5'-monophosphate nucleosides. Additionally, forms a recombinase with the major DNA-binding protein, which displays strand exchange activity. Also acts as a cytoplasmic RNA endonuclease that induces degradation of the majority of the cellular messenger RNAs during early lytic infection. The resulting inhibition of cellular protein synthesis serves to ensure maximal viral gene expression and evasion from host immune response. Internally cleaves host mRNAs which are then degraded by the cellular exonuclease XRN1. Bypasses therefore the regulatory steps of deadenylation and decapping normally required for XRN1 activation. In addition, inhibits host inflammasome activation to promote viral lytic replication by interacting with host AIM2 and disrupting its polymerization. This chain is Shutoff alkaline exonuclease (ORF37), found in Human herpesvirus 8 type P (isolate GK18) (HHV-8).